Reading from the N-terminus, the 96-residue chain is Auxin-responsive protein SAUR29 (96 aa).

Belongs to the ARG7 family.

It localises to the cell membrane. In terms of biological role, functions as a positive effector of cell expansion through modulation of auxin transport. Involved in thermo-responsiveness of plant architecture. Enhances plasma membrane H(+)-ATPase. This Arabidopsis thaliana (Mouse-ear cress) protein is Auxin-responsive protein SAUR29.